Consider the following 154-residue polypeptide: Ribosome maturation factor RimP (154 aa).

Belongs to the RimP family.

The protein resides in the cytoplasm. Functionally, required for maturation of 30S ribosomal subunits. The sequence is that of Ribosome maturation factor RimP from Prochlorococcus marinus (strain MIT 9313).